A 224-amino-acid polypeptide reads, in one-letter code: uncharacterized protein (224 aa).

It is found in the virion. This is an uncharacterized protein from Acanthamoeba polyphaga mimivirus (APMV).